The following is a 314-amino-acid chain: uncharacterized protein (314 aa).

An HTH araC/xylS-type domain is found at 192–289 (TEVKLHIKDN…GSSPGLFRSL (98 aa)). 2 consecutive DNA-binding regions (H-T-H motif) follow at residues 209 to 230 (TDVA…AAEL) and 257 to 279 (IKEI…SAKI).

This is an uncharacterized protein from Bacillus subtilis (strain 168).